A 280-amino-acid polypeptide reads, in one-letter code: tRNA dimethylallyltransferase (280 aa).

9–16 is a binding site for ATP; it reads GPTGSGKT. Residue 11–16 coordinates substrate; sequence TGSGKT. Residues 34 to 37 are interaction with substrate tRNA; sequence DSVS.

It belongs to the IPP transferase family. Monomer. Mg(2+) serves as cofactor.

It carries out the reaction adenosine(37) in tRNA + dimethylallyl diphosphate = N(6)-dimethylallyladenosine(37) in tRNA + diphosphate. Its function is as follows. Catalyzes the transfer of a dimethylallyl group onto the adenine at position 37 in tRNAs that read codons beginning with uridine, leading to the formation of N6-(dimethylallyl)adenosine (i(6)A). The protein is tRNA dimethylallyltransferase of Acholeplasma laidlawii (strain PG-8A).